A 475-amino-acid polypeptide reads, in one-letter code: 3-isopropylmalate dehydratase large subunit (475 aa).

[4Fe-4S] cluster is bound by residues cysteine 348, cysteine 408, and cysteine 411.

Belongs to the aconitase/IPM isomerase family. LeuC type 1 subfamily. In terms of assembly, heterodimer of LeuC and LeuD. [4Fe-4S] cluster is required as a cofactor.

It catalyses the reaction (2R,3S)-3-isopropylmalate = (2S)-2-isopropylmalate. It functions in the pathway amino-acid biosynthesis; L-leucine biosynthesis; L-leucine from 3-methyl-2-oxobutanoate: step 2/4. In terms of biological role, catalyzes the isomerization between 2-isopropylmalate and 3-isopropylmalate, via the formation of 2-isopropylmaleate. In Acidobacterium capsulatum (strain ATCC 51196 / DSM 11244 / BCRC 80197 / JCM 7670 / NBRC 15755 / NCIMB 13165 / 161), this protein is 3-isopropylmalate dehydratase large subunit.